We begin with the raw amino-acid sequence, 517 residues long: Arp2/3 complex-activating protein rickA (517 aa).

Disordered regions lie at residues 313-441 (LENN…SKPA) and 461-517 (KVSD…SFVR). Pro residues-rich tracts occupy residues 319-340 (PPSP…PSPL) and 347-378 (SSPP…PPMA). A WH2 domain is found at 406-423 (DTSDLMREIAGPKKLKKV). The segment at 444–477 (VNALSGLESIFARRAVIKVSDSSSSESDSGNWSD) is central and acidic domains. Residues 463 to 479 (SDSSSSESDSGNWSDVS) are compositionally biased toward low complexity. The segment covering 500-517 (THAQKINNRNSQNPSFVR) has biased composition (polar residues).

In terms of assembly, homodimer.

The protein resides in the cell surface. Functionally, recruits and activates the Arp2/3 complex, which in turn leads to actin polymerization, promoting Rickettsia motility during infection. This Rickettsia conorii (strain ATCC VR-613 / Malish 7) protein is Arp2/3 complex-activating protein rickA (rickA).